Reading from the N-terminus, the 307-residue chain is Probable rRNA-processing protein EBP2 homolog (307 aa).

Disordered regions lie at residues 1 to 22 (MSDF…SDAE), 189 to 208 (QRKM…EAEK), and 236 to 307 (ESKQ…KGRK). A coiled-coil region spans residues 205–252 (EAEKKDMLDKLKKFRKGKLKNLDFLEDAKALESKQKQSAENRKKRNKK). Positions 236 to 245 (ESKQKQSAEN) are enriched in basic and acidic residues. Composition is skewed to basic residues over residues 246-266 (RKKR…KRNT) and 294-307 (RLGK…KGRK).

The protein belongs to the EBP2 family.

The protein localises to the nucleus. It is found in the nucleolus. Required for the processing of the 27S pre-rRNA. The sequence is that of Probable rRNA-processing protein EBP2 homolog from Drosophila melanogaster (Fruit fly).